The chain runs to 154 residues: UPF0260 protein HI_1355 (154 aa).

This sequence belongs to the UPF0260 family.

This Haemophilus influenzae (strain ATCC 51907 / DSM 11121 / KW20 / Rd) protein is UPF0260 protein HI_1355.